A 386-amino-acid chain; its full sequence is SET and MYND domain-containing protein DDB_G0273589 (386 aa).

The 289-residue stretch at 6–294 (NGLELKSSEN…KGDQLTISYI (289 aa)) folds into the SET domain. The segment at 51 to 94 (CFNCIKQLPSVIKLSLKCNQCNEIWYCNEQCKNENINKHQHYEC) adopts an MYND-type zinc-finger fold. Positions 136–171 (NNKFIEQQLNNNNNNNNDNEQLTNTLDDVFDLVENQ) form a coiled coil.

The protein belongs to the class V-like SAM-binding methyltransferase superfamily.

Functionally, probable methyltransferase. The chain is SET and MYND domain-containing protein DDB_G0273589 from Dictyostelium discoideum (Social amoeba).